The following is a 379-amino-acid chain: Cytochrome b (379 aa).

The next 4 membrane-spanning stretches (helical) occupy residues 34–54 (FGSLLGACLILQTITGIFLAM), 78–99 (WLIRNMHANGASLFFMCIYLHI), 114–134 (WNTGITLLLLTMATAFVGYVL), and 179–199 (FFTFHFLLPFTIMGMTMVHLL). Heme b-binding residues include His84 and His98. Positions 183 and 197 each coordinate heme b. His202 contributes to the a ubiquinone binding site. 4 helical membrane-spanning segments follow: residues 227–247 (YKDLLGLILMLAFLLTLTLFY), 289–309 (LGGVLALLLSILVLFLMPTLH), 321–341 (LTQTLFWSFIANLMVLTWIGG), and 348–368 (FITIGQVASILHFLILLILMP).

Belongs to the cytochrome b family. As to quaternary structure, the cytochrome bc1 complex contains 3 respiratory subunits (MT-CYB, CYC1 and UQCRFS1), 2 core proteins (UQCRC1 and UQCRC2) and probably 6 low-molecular weight proteins. Heme b serves as cofactor.

Its subcellular location is the mitochondrion inner membrane. Component of the ubiquinol-cytochrome c reductase complex (complex III or cytochrome b-c1 complex) that is part of the mitochondrial respiratory chain. The b-c1 complex mediates electron transfer from ubiquinol to cytochrome c. Contributes to the generation of a proton gradient across the mitochondrial membrane that is then used for ATP synthesis. The chain is Cytochrome b (MT-CYB) from Glyptemys muhlenbergii (Bog turtle).